Here is a 164-residue protein sequence, read N- to C-terminus: MPELLKQRVETCYQQAETFFKRPFPRPEVSFKLRGQKAGVAHLHENLLRFNLQLYRENQEDFLRQTVAHEVAHLVAHQLFGDRIQAHGEEWQLIMRGVYELPPNRCHNYEVQRRVATRYIYRCPCPQGEFAFTAQRHKLVRQGRRYLCKRCRETLVYSGETRVE.

A SprT-like domain is found at 14 to 156 (QQAETFFKRP…LCKRCRETLV (143 aa)). Histidine 69 serves as a coordination point for Zn(2+). Glutamate 70 is an active-site residue. Histidine 73 serves as a coordination point for Zn(2+).

It belongs to the SprT family. Requires Zn(2+) as cofactor.

It is found in the cytoplasm. The polypeptide is Protein SprT (Pseudomonas putida (strain W619)).